Here is a 418-residue protein sequence, read N- to C-terminus: L-methionine/branched-chain amino acid exporter YjeH (418 aa).

Residues 1 to 15 are Periplasmic-facing; that stretch reads MSGLKQELGLAQGIG. Residues 16–36 form a helical membrane-spanning segment; it reads LLSTSLLGTGVFAVPALAALV. Residues 37–41 lie on the Cytoplasmic side of the membrane; it reads AGNNS. Residues 42–62 form a helical membrane-spanning segment; the sequence is LWAWPVLIILVFPIAIVFAIL. Residues 63-89 are Periplasmic-facing; sequence GRHYPSAGGVAHFVGMAFGSRLERVTG. The helical transmembrane segment at 90–110 threads the bilayer; sequence WLFLSVIPVGLPAALQIAAGF. Over 111–113 the chain is Cytoplasmic; sequence GQA. A helical membrane pass occupies residues 114–134; the sequence is MFGWHSWQLLLAELGTLALVW. At 135–147 the chain is on the periplasmic side; it reads YIGTRGASSSANL. A helical transmembrane segment spans residues 148-168; the sequence is QTVIAGLIVALIVAIWWAGDI. The Cytoplasmic segment spans residues 169-182; the sequence is KPANIPFPAPGNIE. A helical transmembrane segment spans residues 183-203; it reads LTGLFAALSVMFWCFVGLEAF. Residues 204-219 lie on the Periplasmic side of the membrane; that stretch reads AHLASEFKNPERDFPR. A helical transmembrane segment spans residues 220–240; it reads ALMIGLLLAGLVYWGCTVVVL. Topologically, residues 241-257 are cytoplasmic; the sequence is HFDAYGEKMAAAASLPK. The helical transmembrane segment at 258 to 278 threads the bilayer; the sequence is IVVQLFGVGALWIACVIGYLA. Topologically, residues 279–317 are periplasmic; that stretch reads CFASLNIYIQSFARLVWSQAQHNPDHYLARLSSRHIPNN. A helical transmembrane segment spans residues 318 to 338; that stretch reads ALNAVLGCCVVSTLVIHALEI. The Cytoplasmic segment spans residues 339-341; that stretch reads NLD. The helical transmembrane segment at 342–362 threads the bilayer; the sequence is ALIIYANGIFIMIYLLCMLAG. At 363–378 the chain is on the periplasmic side; sequence CKLLQGRYRLLAVVGG. The chain crosses the membrane as a helical span at residues 379 to 399; sequence LLCVLLLAMVGWKSLYALIML. The Cytoplasmic portion of the chain corresponds to 400 to 418; the sequence is AGLWLLLPKRKTPENGITT.

It belongs to the amino acid-polyamine-organocation (APC) superfamily. Amino acid efflux (AAE) (TC 2.A.3.13) family.

The protein localises to the cell inner membrane. It carries out the reaction L-methionine(in) + H(+)(out) = L-methionine(out) + H(+)(in). The catalysed reaction is L-leucine(in) + H(+)(out) = L-leucine(out) + H(+)(in). It catalyses the reaction L-isoleucine(in) + H(+)(out) = L-isoleucine(out) + H(+)(in). The enzyme catalyses L-valine(in) + H(+)(out) = L-valine(out) + H(+)(in). Its activity is regulated as follows. Efflux of L-methionine is inhibited by the proton ionophore carbonyl cyanide m-chlorophenylhydrazone (CCCP). In terms of biological role, catalyzes the efflux of L-methionine, L-leucine, L-isoleucine and L-valine. Activity is dependent on electrochemical potential. The sequence is that of L-methionine/branched-chain amino acid exporter YjeH (yjeH) from Escherichia coli (strain K12).